Here is a 93-residue protein sequence, read N- to C-terminus: Putative defensin-like protein 190 (93 aa).

A signal peptide spans 1 to 30 (MKMAKAAATNDFGFITCLVIFLVLAGISNG). Cystine bridges form between C39–C89, C55–C75, C60–C84, and C64–C86.

The protein belongs to the DEFL family.

Its subcellular location is the secreted. The protein is Putative defensin-like protein 190 of Arabidopsis thaliana (Mouse-ear cress).